A 446-amino-acid polypeptide reads, in one-letter code: Keratin, type I cytoskeletal 25 (446 aa).

Residues 1–74 (MSLRLSSGSR…VNEGGLLSGN (74 aa)) form a head region. The tract at residues 75 to 110 (EKVTMQNLNDRLASYLDNVQALQEANADLEQKIKGW) is coil 1A. The IF rod domain maps to 75–390 (EKVTMQNLND…LLIGGDEGAC (316 aa)). Positions 111–132 (YEKFGPGSCRGLDHDYSRYFPI) are linker 1. Positions 133-224 (IDDLKNQIIT…KNHKEEMQAL (92 aa)) are coil 1B. The segment at 225–247 (QCAAGGNVNVEMNAAPGVDLTVL) is linker 12. The segment at 248–386 (LNNMRAEYEA…ETYCLLIGGD (139 aa)) is coil 2. A tail region spans residues 387 to 446 (EGACKSSSYKSKDYGSGNAGNQIKDPVKAIVVKKVLEEVDQRSKILTTRLHSLEEKSQSN). Ser-438 is modified (phosphoserine).

The protein belongs to the intermediate filament family. Heterodimer of a type I and a type II keratin. Heterodimer with type II keratin KRT5 leading to the formation of keratin intermediate filament (KIF) network. Interacts with KRT6A to form filaments.

It is found in the cytoplasm. Essential for the proper assembly of type I and type II keratin protein complexes and formation of keratin intermediate filaments in the inner root sheath (irs). Plays a role in the cytoskeleton organization. This chain is Keratin, type I cytoskeletal 25, found in Mus musculus (Mouse).